The sequence spans 301 residues: MRVVVVGTRGSALALAQTRFVVERLKETWPETEFKIRTIKTRGDQGASPREEAIFVKEIQEALLSREIDIAVHSLKDLPTESPRGLKIASVPRRQDPRDVFLGKAAKRLKDLPPGAVVGTSSVRRKAQILALRPDLVVRDLRGNVDTRLAALGNGEYDGIVLAAAGLIRLDLRNRIDEFLDPGEVLPAPGQGALALEVREGDDLAEELCYALHHPPSYHRVRAERAFLRGLGAGCLAPVGALAHVEEDGTLRLEGVLLTPDGKSFIRAEIEGDVSEAEELGLDLARDVLEQGGREILAQIR.

The residue at position 235 (Cys-235) is an S-(dipyrrolylmethanemethyl)cysteine.

Belongs to the HMBS family. Monomer. Requires dipyrromethane as cofactor.

It carries out the reaction 4 porphobilinogen + H2O = hydroxymethylbilane + 4 NH4(+). It participates in porphyrin-containing compound metabolism; protoporphyrin-IX biosynthesis; coproporphyrinogen-III from 5-aminolevulinate: step 2/4. Tetrapolymerization of the monopyrrole PBG into the hydroxymethylbilane pre-uroporphyrinogen in several discrete steps. The polypeptide is Porphobilinogen deaminase (Thermus thermophilus (strain ATCC BAA-163 / DSM 7039 / HB27)).